A 435-amino-acid polypeptide reads, in one-letter code: Virulence factor PIT1 (435 aa).

A run of 5 helical transmembrane segments spans residues 33 to 53, 77 to 97, 111 to 131, 143 to 163, and 204 to 224; these read ETTTWNLPIMIAQALLVSEVI, IFFILIKYLTIFAVIFDILVT, WAWTSSTFYFMCSTLVFCVIG, VASWSLSVGLMGQFAVAMWTN, and TFWFLLYNTIFESSILMACCI. N-linked (GlcNAc...) asparagine glycosylation is present at Asn330. Residues 392-404 are compositionally biased toward polar residues; that stretch reads SPQMPSKAQSQSI. The tract at residues 392-435 is disordered; the sequence is SPQMPSKAQSQSIPYKREVEVTVDMSPVPPPPGPSPAPLPAPYM. Pro residues predominate over residues 418-435; sequence PVPPPPGPSPAPLPAPYM.

Post-translationally, O-mannosylated by PMT4. Is also N-glycosylated.

It localises to the cell membrane. Its function is as follows. Plasma membrane virulence factor required for spreading and inducing tumors in infected leaves. This is Virulence factor PIT1 from Mycosarcoma maydis (Corn smut fungus).